The following is a 668-amino-acid chain: MKRFAAVTLAALMLLTVFASAASAADSVEIRGPVFNGSNIVEIVGDGITIDATQFAAFYYDIDDNVTTETLSIKDVSGNSGNVIGEGGIVYSTKIQKVDYEYYKPSLGWDNYSLLGFFAEKYIPLKSNSADKLAKLVIDSDDKITLRTGETLDIGQGYTLQAKQVDVDGEKVWLEFDRDGEYVDDEIIEVGADDSTWDVELDDIQDEDDVTVMRVHVNQVFQGAVDSIAQIEGIWLIDYANAMTIESDDEFGDLDDVSINGDTLNITNEDTFTLTRDSTNELAEGLSFKVADTSSNVLRFYLAKEFTDPGTYEVRGSVASGEASWDASNFAGFYYDLDDNVETESLSVSELNGNVIGEGGLVYTTSIKKVDYDYENEDAGWDQYPIIGFFAEEYIPLKANSADKLAKLVLDSDDKITLRTGETFDLGEGYSIQAKQVDVDGEKVWLEFDKDGEYVDDEIIEVGSNSDNTWDVELDDIEDEDDVVVLKVHVNQVFRGAVDSIAQIEGIWLIDYANAMTIESDDEFGDLDDVSIQGDTLKISNEDTFTLTRDSDEDIGEGMYFKVADTPTSELRYYPAIERIVGNETTSITKPDESGNETVSDNETMPDNTSSETPDLNETDTPEEPTTTPEEPTDNETEPDESNGSPGFGVVLGLAGLLGVVYLVRRNN.

Positions methionine 1–alanine 24 are cleaved as a signal peptide. N-linked (GlcNAc...) asparagine glycosylation is found at asparagine 36, asparagine 65, asparagine 111, asparagine 265, asparagine 583, asparagine 596, asparagine 602, asparagine 608, asparagine 617, and asparagine 635. The interval glutamate 584–valine 650 is disordered. The span at asparagine 596–serine 611 shows a compositional bias: polar residues. The segment covering glutamate 631–glutamate 641 has biased composition (acidic residues). A helical membrane pass occupies residues glycine 644–valine 664.

It belongs to the Methanosarcinales S-layer protein family. In terms of processing, glycosylated.

It localises to the secreted. The protein resides in the cell wall. The protein localises to the S-layer. Its subcellular location is the cell membrane. In terms of biological role, S-layer protein. The S-layer is a paracrystalline mono-layered assembly of proteins which coat the surface of the cell. This Methanosarcina barkeri (strain Fusaro / DSM 804) protein is Major S-layer protein.